A 102-amino-acid polypeptide reads, in one-letter code: Thioredoxin (102 aa).

Residues 1–102 (MVQVVSQENF…SLIKLISKHQ (102 aa)) enclose the Thioredoxin domain. A disulfide bridge connects residues C28 and C31.

Belongs to the thioredoxin family.

Its function is as follows. Participates in various redox reactions through the reversible oxidation of its active center dithiol to a disulfide and catalyzes dithiol-disulfide exchange reactions. The sequence is that of Thioredoxin (trxA) from Chlamydia trachomatis serovar D (strain ATCC VR-885 / DSM 19411 / UW-3/Cx).